The sequence spans 301 residues: Sulfate adenylyltransferase subunit 2 (301 aa).

Belongs to the PAPS reductase family. CysD subfamily. Heterodimer composed of CysD, the smaller subunit, and CysN.

The catalysed reaction is sulfate + ATP + H(+) = adenosine 5'-phosphosulfate + diphosphate. Its pathway is sulfur metabolism; hydrogen sulfide biosynthesis; sulfite from sulfate: step 1/3. In terms of biological role, with CysN forms the ATP sulfurylase (ATPS) that catalyzes the adenylation of sulfate producing adenosine 5'-phosphosulfate (APS) and diphosphate, the first enzymatic step in sulfur assimilation pathway. APS synthesis involves the formation of a high-energy phosphoric-sulfuric acid anhydride bond driven by GTP hydrolysis by CysN coupled to ATP hydrolysis by CysD. This is Sulfate adenylyltransferase subunit 2 from Citrifermentans bemidjiense (strain ATCC BAA-1014 / DSM 16622 / JCM 12645 / Bem) (Geobacter bemidjiensis).